A 297-amino-acid chain; its full sequence is Formamidopyrimidine-DNA glycosylase (297 aa).

P2 serves as the catalytic Schiff-base intermediate with DNA. The Proton donor role is filled by E3. Residue K61 is the Proton donor; for beta-elimination activity of the active site. 2 residues coordinate DNA: R120 and R176. Residues 262-296 (HVYGRQGQPCDRCGTAIVRESFMNRGSHFCPRCQR) form an FPG-type zinc finger. The active-site Proton donor; for delta-elimination activity is the R286.

The protein belongs to the FPG family. In terms of assembly, monomer. It depends on Zn(2+) as a cofactor.

The enzyme catalyses Hydrolysis of DNA containing ring-opened 7-methylguanine residues, releasing 2,6-diamino-4-hydroxy-5-(N-methyl)formamidopyrimidine.. The catalysed reaction is 2'-deoxyribonucleotide-(2'-deoxyribose 5'-phosphate)-2'-deoxyribonucleotide-DNA = a 3'-end 2'-deoxyribonucleotide-(2,3-dehydro-2,3-deoxyribose 5'-phosphate)-DNA + a 5'-end 5'-phospho-2'-deoxyribonucleoside-DNA + H(+). Involved in base excision repair of DNA damaged by oxidation or by mutagenic agents. Acts as a DNA glycosylase that recognizes and removes damaged bases. Has a preference for oxidized purines, such as 7,8-dihydro-8-oxoguanine (8-oxoG). Has AP (apurinic/apyrimidinic) lyase activity and introduces nicks in the DNA strand. Cleaves the DNA backbone by beta-delta elimination to generate a single-strand break at the site of the removed base with both 3'- and 5'-phosphates. The sequence is that of Formamidopyrimidine-DNA glycosylase from Leifsonia xyli subsp. xyli (strain CTCB07).